Here is a 102-residue protein sequence, read N- to C-terminus: Monothiol glutaredoxin-S10 (102 aa).

A Glutaredoxin domain is found at 1–101; the sequence is MDVVARLASQ…ILLKEAGALW (101 aa). Cys21 contacts [2Fe-2S] cluster. A Responsive for interaction with TGA factors motif is present at residues 99-102; sequence ALWL.

Belongs to the glutaredoxin family. CC-type subfamily.

Its subcellular location is the cytoplasm. It is found in the nucleus. May only reduce GSH-thiol disulfides, but not protein disulfides. This chain is Monothiol glutaredoxin-S10 (GRXS10), found in Arabidopsis thaliana (Mouse-ear cress).